Reading from the N-terminus, the 82-residue chain is Sec-independent protein translocase protein TatA (82 aa).

A helical transmembrane segment spans residues 1-21; that stretch reads MGGISVWQLLIIAVIVVLLFG. The disordered stretch occupies residues 41 to 82; it reads KAMSEDEPAKKDDKDADFEPKSLEEQQKKEAAPESKKDKEQA. Basic and acidic residues predominate over residues 42 to 82; that stretch reads AMSEDEPAKKDDKDADFEPKSLEEQQKKEAAPESKKDKEQA.

Belongs to the TatA/E family. As to quaternary structure, the Tat system comprises two distinct complexes: a TatABC complex, containing multiple copies of TatA, TatB and TatC subunits, and a separate TatA complex, containing only TatA subunits. Substrates initially bind to the TatABC complex, which probably triggers association of the separate TatA complex to form the active translocon.

It localises to the cell inner membrane. Part of the twin-arginine translocation (Tat) system that transports large folded proteins containing a characteristic twin-arginine motif in their signal peptide across membranes. TatA could form the protein-conducting channel of the Tat system. This Vibrio campbellii (strain ATCC BAA-1116) protein is Sec-independent protein translocase protein TatA.